The chain runs to 296 residues: Small ribosomal subunit biogenesis GTPase RsgA (296 aa).

Residues 63 to 224 (KNQLVRPMVA…IADTPGFSSY (162 aa)) form the CP-type G domain. GTP contacts are provided by residues 112–115 (SKTD) and 167–175 (GQTGAGKST). C248, C253, H255, and C261 together coordinate Zn(2+).

This sequence belongs to the TRAFAC class YlqF/YawG GTPase family. RsgA subfamily. In terms of assembly, monomer. Associates with 30S ribosomal subunit, binds 16S rRNA. Zn(2+) serves as cofactor.

It is found in the cytoplasm. One of several proteins that assist in the late maturation steps of the functional core of the 30S ribosomal subunit. Helps release RbfA from mature subunits. May play a role in the assembly of ribosomal proteins into the subunit. Circularly permuted GTPase that catalyzes slow GTP hydrolysis, GTPase activity is stimulated by the 30S ribosomal subunit. This chain is Small ribosomal subunit biogenesis GTPase RsgA, found in Limosilactobacillus fermentum (strain NBRC 3956 / LMG 18251) (Lactobacillus fermentum).